The chain runs to 294 residues: Nucleotide-binding protein Smlt1108 (294 aa).

16–23 (GLSGSGKS) serves as a coordination point for ATP. 69–72 (DVRG) provides a ligand contact to GTP.

Belongs to the RapZ-like family.

Displays ATPase and GTPase activities. The chain is Nucleotide-binding protein Smlt1108 from Stenotrophomonas maltophilia (strain K279a).